The sequence spans 37 residues: Large ribosomal subunit protein bL36 (37 aa).

It belongs to the bacterial ribosomal protein bL36 family.

This chain is Large ribosomal subunit protein bL36, found in Legionella pneumophila subsp. pneumophila (strain Philadelphia 1 / ATCC 33152 / DSM 7513).